Consider the following 69-residue polypeptide: Conotoxin Eb6.19 (69 aa).

A signal peptide spans 1 to 17 (VLIIAVLFLTACQLTTA). Residues 18–41 (ETYSRGRQKHRARRSTDKNSKWTR) constitute a propeptide that is removed on maturation. 3 disulfide bridges follow: Cys-43/Cys-57, Cys-50/Cys-61, and Cys-56/Cys-68.

It belongs to the conotoxin O1 superfamily. As to expression, expressed by the venom duct.

The protein localises to the secreted. In Conus ebraeus (Hebrew cone), this protein is Conotoxin Eb6.19 (E1).